Reading from the N-terminus, the 286-residue chain is uncharacterized protein (286 aa).

Disordered regions lie at residues 1-38 (MSQK…EDDV), 108-146 (HTGE…RRHK), 196-227 (RTQK…KTRL), and 241-286 (DVDD…PRSS). Positions 18-29 (SSSKQVLSSTSS) are enriched in low complexity. The span at 243-268 (DDQKKDGSGEEKKEKKSAEKEKKISH) shows a compositional bias: basic and acidic residues. Residues 269–278 (ENVQSLSPSS) are compositionally biased toward polar residues.

This is an uncharacterized protein from Caenorhabditis elegans.